A 93-amino-acid polypeptide reads, in one-letter code: Integration host factor subunit beta (93 aa).

It belongs to the bacterial histone-like protein family. Heterodimer of an alpha and a beta chain.

This protein is one of the two subunits of integration host factor, a specific DNA-binding protein that functions in genetic recombination as well as in transcriptional and translational control. The sequence is that of Integration host factor subunit beta from Cereibacter sphaeroides (strain KD131 / KCTC 12085) (Rhodobacter sphaeroides).